Consider the following 358-residue polypeptide: MSEKMYATLKTAEKIFSEISSVITKQEGLEILNGSIPLTTCLDKAFQERNRYFYNKVRIHILDNIKNGYCPEDCGYCAQRKNANSGIKEYPMKSEAEIYEDAVQAKKNGAYRFCMVTSGTGPNRLTTERLASTIRRITNELGMKVCLSAGLLDEEKAQVLKSAGLDRYNHNLNTSENHYPEICDTHTYAQRTQTLDSVSKAGIGMCSGVIVGMGESFQDIVDMAFELKSFRVISIPVNFFIPVKGHAIKNPGILTPELCVRILCLFRLVNPDSEIRIAAGREGHLRSLSAMALFAANSLFSSGYLNVKGSEIIETVTMIRDAGFVPELVDGGILPEESGTEMLYSEKNFPELYKFKKS.

A Radical SAM core domain is found at 55 to 278 (NKVRIHILDN…VNPDSEIRIA (224 aa)). [4Fe-4S] cluster-binding residues include Cys70, Cys74, and Cys77. 4 residues coordinate [2Fe-2S] cluster: Cys114, Cys146, Cys206, and Arg276.

Belongs to the radical SAM superfamily. Biotin synthase family. In terms of assembly, homodimer. It depends on [4Fe-4S] cluster as a cofactor. [2Fe-2S] cluster is required as a cofactor.

It carries out the reaction (4R,5S)-dethiobiotin + (sulfur carrier)-SH + 2 reduced [2Fe-2S]-[ferredoxin] + 2 S-adenosyl-L-methionine = (sulfur carrier)-H + biotin + 2 5'-deoxyadenosine + 2 L-methionine + 2 oxidized [2Fe-2S]-[ferredoxin]. It functions in the pathway cofactor biosynthesis; biotin biosynthesis; biotin from 7,8-diaminononanoate: step 2/2. In terms of biological role, catalyzes the conversion of dethiobiotin (DTB) to biotin by the insertion of a sulfur atom into dethiobiotin via a radical-based mechanism. The protein is Biotin synthase of Leptospira borgpetersenii serovar Hardjo-bovis (strain JB197).